A 274-amino-acid polypeptide reads, in one-letter code: 2,3,4,5-tetrahydropyridine-2,6-dicarboxylate N-succinyltransferase (274 aa).

Residues Arg-106 and Asp-143 each contribute to the substrate site.

It belongs to the transferase hexapeptide repeat family. In terms of assembly, homotrimer.

It localises to the cytoplasm. The enzyme catalyses (S)-2,3,4,5-tetrahydrodipicolinate + succinyl-CoA + H2O = (S)-2-succinylamino-6-oxoheptanedioate + CoA. It functions in the pathway amino-acid biosynthesis; L-lysine biosynthesis via DAP pathway; LL-2,6-diaminopimelate from (S)-tetrahydrodipicolinate (succinylase route): step 1/3. The sequence is that of 2,3,4,5-tetrahydropyridine-2,6-dicarboxylate N-succinyltransferase from Rickettsia rickettsii (strain Sheila Smith).